Reading from the N-terminus, the 476-residue chain is Cytoplasmic 60S subunit biogenesis factor ZNF622 (476 aa).

N-acetylalanine is present on A2. U1-type zinc fingers lie at residues L4 to H28 and T69 to H93. The disordered stretch occupies residues A137 to P243. A compositionally biased stretch (basic and acidic residues) spans V167–P177. The segment covering E195–A239 has biased composition (acidic residues). Residue S275 is modified to Phosphoserine.

Belongs to the REI1 family. Homo- and heterodimer. Associates with pre-60S ribosomal particles. Interacts with MELK and MYBL2. Interacts with DNAJC21. In terms of processing, phosphorylated by MELK. The phosphorylation may redirect the protein to the nucleus. Ubiquitinated by HECTD1, leading to its degradation.

It localises to the cytoplasm. Its subcellular location is the nucleus. Its function is as follows. Pre-60S-associated cytoplasmic factor involved in the cytoplasmic maturation of the 60S subunit. The chain is Cytoplasmic 60S subunit biogenesis factor ZNF622 (Znf622) from Mus musculus (Mouse).